Here is a 345-residue protein sequence, read N- to C-terminus: Acetylserotonin O-methyltransferase (345 aa).

Residues Tyr147, Trp164, Asp210, 235 to 237 (GDF), and Arg252 contribute to the S-adenosyl-L-methionine site. His255 acts as the Proton donor/acceptor in catalysis. The substrate site is built by Asp256, Asn302, and Gln306.

It belongs to the class I-like SAM-binding methyltransferase superfamily. Cation-independent O-methyltransferase family. In terms of assembly, homodimer. In terms of tissue distribution, expressed in the pineal gland (at protein level). Not detectable in retina, nor in liver.

It catalyses the reaction N-acetylserotonin + S-adenosyl-L-methionine = melatonin + S-adenosyl-L-homocysteine + H(+). It functions in the pathway aromatic compound metabolism; melatonin biosynthesis; melatonin from serotonin: step 1/2. Its function is as follows. Catalyzes the transfer of a methyl group onto N-acetylserotonin, producing melatonin (N-acetyl-5-methoxytryptamine). In Bos taurus (Bovine), this protein is Acetylserotonin O-methyltransferase (ASMT).